Here is a 131-residue protein sequence, read N- to C-terminus: Small ribosomal subunit protein uS8 (131 aa).

The protein belongs to the universal ribosomal protein uS8 family. Part of the 30S ribosomal subunit. Contacts proteins S5 and S12.

One of the primary rRNA binding proteins, it binds directly to 16S rRNA central domain where it helps coordinate assembly of the platform of the 30S subunit. In Ruthia magnifica subsp. Calyptogena magnifica, this protein is Small ribosomal subunit protein uS8.